We begin with the raw amino-acid sequence, 367 residues long: 4-hydroxy-3-methylbut-2-en-1-yl diphosphate synthase (flavodoxin) (367 aa).

[4Fe-4S] cluster is bound by residues Cys-270, Cys-273, Cys-305, and Glu-312.

This sequence belongs to the IspG family. [4Fe-4S] cluster is required as a cofactor.

It carries out the reaction (2E)-4-hydroxy-3-methylbut-2-enyl diphosphate + oxidized [flavodoxin] + H2O + 2 H(+) = 2-C-methyl-D-erythritol 2,4-cyclic diphosphate + reduced [flavodoxin]. Its pathway is isoprenoid biosynthesis; isopentenyl diphosphate biosynthesis via DXP pathway; isopentenyl diphosphate from 1-deoxy-D-xylulose 5-phosphate: step 5/6. In terms of biological role, converts 2C-methyl-D-erythritol 2,4-cyclodiphosphate (ME-2,4cPP) into 1-hydroxy-2-methyl-2-(E)-butenyl 4-diphosphate. The protein is 4-hydroxy-3-methylbut-2-en-1-yl diphosphate synthase (flavodoxin) of Buchnera aphidicola subsp. Schizaphis graminum (strain Sg).